Consider the following 264-residue polypeptide: Accessory gland-specific peptide 26Aa (264 aa).

The first 18 residues, 1-18 (MNQILLCSPILLLLFTVA), serve as a signal peptide directing secretion. Positions 1-138 (MNQILLCSPI…LQQRLLTEQN (138 aa)) are sufficient for promoting ovulation when expressed in females. N-linked (GlcNAc...) asparagine glycans are attached at residues Asn88, Asn122, Asn138, and Asn145. Positions 189–219 (LQNTRKSTKPCKKRSSKDSAPPAANQFQEAN) are disordered. The segment covering 194–203 (KSTKPCKKRS) has biased composition (basic residues). The necessary and sufficient for homodimerization stretch occupies residues 219–264 (NVRNTYRNKYLTLLKELSQKINNEIAKVATDVPTETNPSQGNLPTL).

Homodimer. As to quaternary structure, may form a homodimer. In terms of processing, glycosylation. Post-translationally, undergoes several cleavages as it is secreted and is further processed in the recipient female. The precursor molecule is proteolytically cleaved by the seminal metalloprotease Semp1 at Lys-48 to produce CP1-N and CP1-C. Cleaved at Lys-67 by Semp1 to generate CP2-N and CP2-C. Cleavage appears to take place in the mated female genital tract. In terms of processing, cleaved at Lys-117 by Semp1 to generate CP3-N and CP3-C. Cleavage appears to take place in the mated female genital tract. In terms of tissue distribution, produced in the male accessory glands and secreted into seminal fluid (at protein level). Detected in the main cells and secondary cells of the accessory glands of 1 day old males (at protein level). In 5 day old males, confined to the secondary cells and only reappears in the main cells after mating (at protein level). Produced in adult males 3-4 hr after eclosion, levels increase reaching a peak at day 3-5 which is maintained until at least day 10 of adulthood (at protein level). In unmated male adults, levels are maintained for the first 6 days of adulthood and then gradually decrease for at least the next 8 days. In mated females, detected in the genital tract 3 minutes after the start of mating (ASM) and is secreted into the female hemolymph via the posterior vaginal wall 5 minutes ASM (at protein level).

Its subcellular location is the secreted. It localises to the cytoplasm. Male seminal protein which enhances ovulation in female Drosophila by stimulating the release of oocytes by the ovary following mating. Acts by increasing octopamine (OA) neuronal signaling in the female genital tract leading to the postmating relaxation of the oviduct muscles. This activation of the OA signaling pathway is likely to indirectly contribute to the mating-dependent increase in the number of OA synaptic sites in the female reproductive tract. Functionally, male seminal peptide which is able to enhance ovulation in female Drosophila. The chain is Accessory gland-specific peptide 26Aa from Drosophila melanogaster (Fruit fly).